The following is a 250-amino-acid chain: Urease accessory protein UreF (250 aa).

The interval 1–21 (MDEADPGEAEAAQAEAAQDGA) is disordered. Residues 9 to 21 (AEAAQAEAAQDGA) show a composition bias toward low complexity.

It belongs to the UreF family. As to quaternary structure, ureD, UreF and UreG form a complex that acts as a GTP-hydrolysis-dependent molecular chaperone, activating the urease apoprotein by helping to assemble the nickel containing metallocenter of UreC. The UreE protein probably delivers the nickel.

Its subcellular location is the cytoplasm. Required for maturation of urease via the functional incorporation of the urease nickel metallocenter. The sequence is that of Urease accessory protein UreF from Methylobacterium sp. (strain 4-46).